Here is a 380-residue protein sequence, read N- to C-terminus: MDSGCWLFGGEFEDSVFEERPERRSGPPASYCAKLCEPQWFYEETESSDDVEVLTLKKFKGDLAYRRQEYQKALQEYSSISEKLSSTNFAMKRDVQEGQARCLAHLGRHMEALEIAANLENKATNTDHLTTVLYLQLAICSSLQNLEKTIFCLQKLISLHPFNPWNWGKLAEAYLNLGPALSAALASSQKQHSFTSSDKTIKSFFPHSGKDCLLCFPETLPESSLFSVEANSSNSQKNEKALTNIQNCMAEKRETVLIETQLKACASFIRTRLLLQFTQPQQTSFALERNLRTQQEIEDKMKGFSFKEDTLLLIAEVMGEDIPEKIKDEVHPEVKCVGSVALTALVTVSSEEFEDKWFRKIKDHFCPFENQFHTEIQILA.

This is an uncharacterized protein from Homo sapiens (Human).